Consider the following 177-residue polypeptide: Nucleoside triphosphate/diphosphate phosphatase (177 aa).

Residue Arg-23 is the Proton donor of the active site. Mg(2+)-binding residues include Asn-87, Asp-103, Asp-105, Asp-107, Asp-120, and Glu-123.

The protein belongs to the Ntdp family. Mg(2+) serves as cofactor.

The catalysed reaction is a ribonucleoside 5'-triphosphate + H2O = a ribonucleoside 5'-diphosphate + phosphate + H(+). The enzyme catalyses a ribonucleoside 5'-diphosphate + H2O = a ribonucleoside 5'-phosphate + phosphate + H(+). Its function is as follows. Has nucleoside phosphatase activity towards nucleoside triphosphates and nucleoside diphosphates. The polypeptide is Nucleoside triphosphate/diphosphate phosphatase (Streptococcus pneumoniae (strain ATCC 700669 / Spain 23F-1)).